The chain runs to 510 residues: tRNA-2-methylthio-N(6)-dimethylallyladenosine synthase (510 aa).

Residues 1-25 (MSGFNDSPVPESAEKADGLLSQERG) are disordered. The 121-residue stretch at 34-154 (RKLFVKSYGC…LPDLLRRVAH (121 aa)) folds into the MTTase N-terminal domain. 6 residues coordinate [4Fe-4S] cluster: cysteine 43, cysteine 79, cysteine 117, cysteine 195, cysteine 199, and cysteine 202. Residues 181–414 (AERGVGAFVT…QALLEEQRQA (234 aa)) form the Radical SAM core domain. The TRAM domain occupies 417-479 (KAMIGRVLPV…PNSFHGRLLA (63 aa)). The segment covering 484–493 (QESAQGQESA) has biased composition (polar residues). The interval 484–510 (QESAQGQESAQGMERMEQNARAWEVPV) is disordered.

This sequence belongs to the methylthiotransferase family. MiaB subfamily. As to quaternary structure, monomer. It depends on [4Fe-4S] cluster as a cofactor.

It is found in the cytoplasm. The catalysed reaction is N(6)-dimethylallyladenosine(37) in tRNA + (sulfur carrier)-SH + AH2 + 2 S-adenosyl-L-methionine = 2-methylsulfanyl-N(6)-dimethylallyladenosine(37) in tRNA + (sulfur carrier)-H + 5'-deoxyadenosine + L-methionine + A + S-adenosyl-L-homocysteine + 2 H(+). Catalyzes the methylthiolation of N6-(dimethylallyl)adenosine (i(6)A), leading to the formation of 2-methylthio-N6-(dimethylallyl)adenosine (ms(2)i(6)A) at position 37 in tRNAs that read codons beginning with uridine. The protein is tRNA-2-methylthio-N(6)-dimethylallyladenosine synthase of Beijerinckia indica subsp. indica (strain ATCC 9039 / DSM 1715 / NCIMB 8712).